The chain runs to 1035 residues: FACT complex subunit SPT16 (1035 aa).

Positions 432–500 form a coiled coil; the sequence is FLKKEDEEEE…AKRRLTEQKG (69 aa). Disordered regions lie at residues 491-520 and 920-1035; these read AKRR…ASQV and EQGG…KRKK. Positions 499-519 are enriched in polar residues; sequence KGGQQTMKARKSNVSYKNASQ. The segment covering 929–985 has biased composition (acidic residues); it reads PDGEGSDAAEGDSESELDDETFNPSEDEEEEEEDSDEDYSDETEDSVDSEESADSEE. Residues 986-1006 show a composition bias toward basic and acidic residues; the sequence is ESGKDWDELEEEARKADRESL.

Belongs to the peptidase M24 family. SPT16 subfamily. Component of the FACT complex (also called the DUF complex), a stable heterodimer of ssrp1 and supt16h. May also be a component of a ck2-spt16-ssrp1 complex composed of ssrp1, supt16h, csnk2a1, csnk2a2 and csnk2b. The FACT complex may also interact with vcp.

It localises to the nucleus. It is found in the chromosome. Functionally, component of the FACT complex, a general chromatin factor that acts to reorganize nucleosomes. The FACT complex is involved in multiple processes that require DNA as a template such as mRNA elongation, DNA replication and DNA repair. During transcription elongation the FACT complex acts as a histone chaperone that both destabilizes and restores nucleosomal structure. It facilitates the passage of RNA polymerase II and transcription by promoting the dissociation of one histone H2A-H2B dimer from the nucleosome, then subsequently promotes the reestablishment of the nucleosome following the passage of RNA polymerase II. The polypeptide is FACT complex subunit SPT16 (supt16h) (Xenopus laevis (African clawed frog)).